We begin with the raw amino-acid sequence, 243 residues long: Uba3-binding protein but1 (243 aa).

The disordered stretch occupies residues 28-50 (KSTKKRRSSTKDEETRGMHPHIK).

As to quaternary structure, homodimer. Interacts with but2 and uba3.

The protein resides in the nucleus. Acts as a negative regulator of the NEDD8 pathway. Has a role in meiosis. The polypeptide is Uba3-binding protein but1 (but1) (Schizosaccharomyces pombe (strain 972 / ATCC 24843) (Fission yeast)).